The following is a 428-amino-acid chain: Adenylosuccinate synthetase, chloroplastic (428 aa).

GTP contacts are provided by residues 17 to 23 (GDEGKGK) and 45 to 47 (GHT). The active-site Proton acceptor is Asp18. Mg(2+) is bound by residues Asp18 and Gly45. Residues 18–21 (DEGK), 43–46 (NAGH), Thr135, Arg149, Asn226, Thr241, and Arg305 each bind IMP. The active-site Proton donor is His46. 301-307 (TTTGRPR) is a binding site for substrate. GTP contacts are provided by residues Arg307, 333–335 (KLD), and 416–418 (GVG).

The protein belongs to the adenylosuccinate synthetase family. In terms of assembly, homodimer. Mg(2+) serves as cofactor.

Its subcellular location is the plastid. The protein localises to the chloroplast. It catalyses the reaction IMP + L-aspartate + GTP = N(6)-(1,2-dicarboxyethyl)-AMP + GDP + phosphate + 2 H(+). It functions in the pathway purine metabolism; AMP biosynthesis via de novo pathway; AMP from IMP: step 1/2. Plays an important role in the de novo pathway and in the salvage pathway of purine nucleotide biosynthesis. Catalyzes the first committed step in the biosynthesis of AMP from IMP. The chain is Adenylosuccinate synthetase, chloroplastic from Ostreococcus lucimarinus (strain CCE9901).